Reading from the N-terminus, the 342-residue chain is uncharacterized protein (342 aa).

Arg-69 provides a ligand contact to substrate. His-176 functions as the Proton donor in the catalytic mechanism. Residue Asp-240 participates in substrate binding.

The protein belongs to the aldose epimerase family.

This is an uncharacterized protein from Saccharomyces cerevisiae (strain ATCC 204508 / S288c) (Baker's yeast).